A 334-amino-acid chain; its full sequence is Glyceraldehyde-3-phosphate dehydrogenase (334 aa).

Residues 12–13, D35, R79, and S121 each bind NAD(+); that span reads RI. Residues 152 to 154, T183, R198, 211 to 212, and R234 each bind D-glyceraldehyde 3-phosphate; these read SCT and TG. Catalysis depends on C153, which acts as the Nucleophile. N315 contributes to the NAD(+) binding site.

The protein belongs to the glyceraldehyde-3-phosphate dehydrogenase family. Homotetramer.

It is found in the cytoplasm. It catalyses the reaction D-glyceraldehyde 3-phosphate + phosphate + NAD(+) = (2R)-3-phospho-glyceroyl phosphate + NADH + H(+). The protein operates within carbohydrate degradation; glycolysis; pyruvate from D-glyceraldehyde 3-phosphate: step 1/5. Catalyzes the oxidative phosphorylation of glyceraldehyde 3-phosphate (G3P) to 1,3-bisphosphoglycerate (BPG) using the cofactor NAD. The first reaction step involves the formation of a hemiacetal intermediate between G3P and a cysteine residue, and this hemiacetal intermediate is then oxidized to a thioester, with concomitant reduction of NAD to NADH. The reduced NADH is then exchanged with the second NAD, and the thioester is attacked by a nucleophilic inorganic phosphate to produce BPG. The chain is Glyceraldehyde-3-phosphate dehydrogenase (gap) from Corynebacterium glutamicum (strain ATCC 13032 / DSM 20300 / JCM 1318 / BCRC 11384 / CCUG 27702 / LMG 3730 / NBRC 12168 / NCIMB 10025 / NRRL B-2784 / 534).